The following is a 511-amino-acid chain: Kinesin-like protein 8 (511 aa).

The Kinesin motor domain maps to 5–356 (NVRVIVRVRP…LRYSEAARRI (352 aa)). 107–114 (GQKGTGKT) serves as a coordination point for ATP. Serine 278, serine 279, serine 284, and serine 456 each carry phosphoserine. A coiled-coil region spans residues 373–489 (EGELDDILTT…KLVKSQLHDY (117 aa)).

This sequence belongs to the TRAFAC class myosin-kinesin ATPase superfamily. Kinesin family.

It is found in the cytoplasm. It localises to the cytoskeleton. The polypeptide is Kinesin-like protein 8 (klp8) (Schizosaccharomyces pombe (strain 972 / ATCC 24843) (Fission yeast)).